The sequence spans 287 residues: 2-dehydro-3-deoxyphosphooctonate aldolase (287 aa).

It belongs to the KdsA family.

The protein resides in the cytoplasm. The catalysed reaction is D-arabinose 5-phosphate + phosphoenolpyruvate + H2O = 3-deoxy-alpha-D-manno-2-octulosonate-8-phosphate + phosphate. Its pathway is carbohydrate biosynthesis; 3-deoxy-D-manno-octulosonate biosynthesis; 3-deoxy-D-manno-octulosonate from D-ribulose 5-phosphate: step 2/3. The protein operates within bacterial outer membrane biogenesis; lipopolysaccharide biosynthesis. The polypeptide is 2-dehydro-3-deoxyphosphooctonate aldolase (Nitrobacter winogradskyi (strain ATCC 25391 / DSM 10237 / CIP 104748 / NCIMB 11846 / Nb-255)).